The sequence spans 220 residues: Tumor protein p53-inducible nuclear protein 2 (220 aa).

Residues 1-12 show a composition bias toward low complexity; that stretch reads MFQRLSSLFFST. Disordered regions lie at residues 1–24, 41–69, and 119–220; these read MFQR…CPRA, PDSY…LMDE, and PGSP…QFNY. S14 is subject to Phosphoserine. The LIR signature appears at 26–41; it reads VSEEDEVDGWLIIDLP. A compositionally biased stretch (pro residues) spans 47–64; that stretch reads PPSPGAAPAPAGRPPPAP. A Phosphoserine modification is found at S136. Residues 152-170 are compositionally biased toward low complexity; the sequence is HAAPLPARAALLEKAGQVR. Positions 205–220 are enriched in polar residues; that stretch reads NQSSFIYQPCQRQFNY.

As to quaternary structure, interacts with VMP1, GABARAP, GABARAPL1, GABARAPL2, MAP1LC3A, MAP1LC3B, MAP1LC3C and THRA.

Its subcellular location is the cytoplasm. It localises to the cytosol. It is found in the nucleus. The protein resides in the PML body. The protein localises to the cytoplasmic vesicle. Its subcellular location is the autophagosome. In terms of biological role, dual regulator of transcription and autophagy. Positively regulates autophagy and is required for autophagosome formation and processing. May act as a scaffold protein that recruits MAP1LC3A, GABARAP and GABARAPL2 and brings them to the autophagosome membrane by interacting with VMP1 where, in cooperation with the BECN1-PI3-kinase class III complex, they trigger autophagosome development. Acts as a transcriptional activator of THRA. The protein is Tumor protein p53-inducible nuclear protein 2 (TP53INP2) of Homo sapiens (Human).